The chain runs to 529 residues: Beta-galactoside alpha-2,6-sialyltransferase 2 (529 aa).

At 1–11 the chain is on the cytoplasmic side; it reads MKPHLKQWRQR. A helical; Signal-anchor for type II membrane protein transmembrane segment spans residues 12–32; that stretch reads MLFGLFAGGLLFLLIFIYFTD. Residues 33 to 529 lie on the Lumenal side of the membrane; sequence SNPAEPVPSS…PAPSPVIPHS (497 aa). Positions 142–186 are disordered; it reads SHSQGTLGFPSPGEPGPREGAFPAAQVQRRRVKKRHRRQRRSHVL. Basic residues predominate over residues 169-183; that stretch reads QRRRVKKRHRRQRRS. An N-linked (GlcNAc...) asparagine glycan is attached at Asn211. Intrachain disulfides connect Cys253-Cys519, Cys296-Cys448, and Cys466-Cys477.

This sequence belongs to the glycosyltransferase 29 family.

The protein localises to the golgi apparatus. It is found in the golgi stack membrane. The enzyme catalyses a beta-D-galactoside + CMP-N-acetyl-beta-neuraminate = an N-acetyl-alpha-neuraminyl-(2-&gt;6)-beta-D-galactosyl derivative + CMP + H(+). Its function is as follows. Transfers sialic acid from the donor of substrate CMP-sialic acid to galactose containing acceptor substrates. Has alpha-2,6-sialyltransferase activity toward oligosaccharides that have the Gal-beta-1,4-GlcNAc sequence at the non-reducing end of their carbohydrate groups, but it has weak or no activities toward glycoproteins and glycolipids. This is Beta-galactoside alpha-2,6-sialyltransferase 2 (ST6GAL2) from Pan troglodytes (Chimpanzee).